The chain runs to 224 residues: Mammalian ependymin-related protein 1 (224 aa).

Residues 1–37 form the signal peptide; it reads MPARAPRRLVQGPRGTWLLGSLWVWVLCGLGMAGSLG. Disulfide bonds link Cys-42-Cys-172, Cys-88-Cys-222, and Cys-113-Cys-210. Asn-130 and Asn-182 each carry an N-linked (GlcNAc...) asparagine glycan.

Belongs to the ependymin family. In terms of assembly, homodimer. Post-translationally, N-glycosylated; the glycan contains mannose-6-phosphate moieties. In terms of tissue distribution, detected in brain, small intestine and in soleus, extensor digitorum longus and white gastrocnemius (at protein level). Detected in brain and skeletal muscle, and at lower leavels in heart.

It is found in the lysosome lumen. It localises to the secreted. In terms of biological role, binds anionic lipids and gangliosides at acidic pH. The polypeptide is Mammalian ependymin-related protein 1 (Epdr1) (Mus musculus (Mouse)).